A 1459-amino-acid polypeptide reads, in one-letter code: Endogenous retrovirus group K member 7 Pol protein (1459 aa).

The region spanning 57–245 (LEKGHIEPSF…TPFHYLGMQI (189 aa)) is the Reverse transcriptase domain. An LPQG motif is present at residues 161–164 (LPQG). The YXDD signature appears at 195–198 (YIDD). The RNase H type-1 domain maps to 460–590 (LENALTVFTD…ADLLVSSALI (131 aa)). Residues aspartate 469, glutamate 497, aspartate 517, and aspartate 582 each contribute to the Mg(2+) site. An Integrase-type zinc finger spans residues 587 to 628 (SALIKAQELHALTHVNAAGLKNKFDVTWKQAKDIVQHCTQCQ). Histidine 596, histidine 600, cysteine 624, and cysteine 627 together coordinate Zn(2+). Residues 642 to 803 (RGLCPNALWQ…TSAEQHLTGK (162 aa)) form the Integrase catalytic domain. A DNA-binding region (integrase-type) is located at residues 811–859 (KLIWWKDNKNKTWEIGKVITWGRGFACVSPGENQLPVWIPTRHLKFYNE).

It belongs to the beta type-B retroviral polymerase family. HERV class-II K(HML-2) pol subfamily.

It catalyses the reaction DNA(n) + a 2'-deoxyribonucleoside 5'-triphosphate = DNA(n+1) + diphosphate. The enzyme catalyses Endonucleolytic cleavage to 5'-phosphomonoester.. Its function is as follows. Early post-infection, the reverse transcriptase converts the viral RNA genome into double-stranded viral DNA. The RNase H domain of the reverse transcriptase performs two functions. It degrades the RNA template and specifically removes the RNA primer from the RNA/DNA hybrid. Following nuclear import, the integrase catalyzes the insertion of the linear, double-stranded viral DNA into the host cell chromosome. Endogenous Pol proteins may have kept, lost or modified their original function during evolution. This chain is Endogenous retrovirus group K member 7 Pol protein (ERVK-7), found in Homo sapiens (Human).